Here is a 551-residue protein sequence, read N- to C-terminus: NAD(P)H-quinone oxidoreductase chain 4 (551 aa).

Transmembrane regions (helical) follow at residues phenylalanine 25–isoleucine 45, tryptophan 56–glycine 76, leucine 111–phenylalanine 131, proline 133–valine 153, leucine 157–tryptophan 177, phenylalanine 189–phenylalanine 209, leucine 233–histidine 253, threonine 264–methionine 284, phenylalanine 298–phenylalanine 318, methionine 335–leucine 355, glutamine 356–aspartate 376, phenylalanine 397–valine 417, isoleucine 438–methionine 458, and valine 485–methionine 505.

It belongs to the complex I subunit 4 family.

It is found in the cellular thylakoid membrane. The enzyme catalyses a plastoquinone + NADH + (n+1) H(+)(in) = a plastoquinol + NAD(+) + n H(+)(out). The catalysed reaction is a plastoquinone + NADPH + (n+1) H(+)(in) = a plastoquinol + NADP(+) + n H(+)(out). In terms of biological role, NDH-1 shuttles electrons from NAD(P)H, via FMN and iron-sulfur (Fe-S) centers, to quinones in the respiratory chain. The immediate electron acceptor for the enzyme in this species is believed to be plastoquinone. Couples the redox reaction to proton translocation (for every two electrons transferred, four hydrogen ions are translocated across the cytoplasmic membrane), and thus conserves the redox energy in a proton gradient. The polypeptide is NAD(P)H-quinone oxidoreductase chain 4 (Synechococcus sp. (strain WH7803)).